The sequence spans 365 residues: tRNA/tmRNA (uracil-C(5))-methyltransferase (365 aa).

Residues glutamine 189, tyrosine 217, asparagine 222, glutamate 238, and aspartate 298 each contribute to the S-adenosyl-L-methionine site. Residue cysteine 323 is the Nucleophile of the active site. The active-site Proton acceptor is glutamate 357.

The protein belongs to the class I-like SAM-binding methyltransferase superfamily. RNA M5U methyltransferase family. TrmA subfamily.

It carries out the reaction uridine(54) in tRNA + S-adenosyl-L-methionine = 5-methyluridine(54) in tRNA + S-adenosyl-L-homocysteine + H(+). It catalyses the reaction uridine(341) in tmRNA + S-adenosyl-L-methionine = 5-methyluridine(341) in tmRNA + S-adenosyl-L-homocysteine + H(+). In terms of biological role, dual-specificity methyltransferase that catalyzes the formation of 5-methyluridine at position 54 (m5U54) in all tRNAs, and that of position 341 (m5U341) in tmRNA (transfer-mRNA). The chain is tRNA/tmRNA (uracil-C(5))-methyltransferase from Saccharophagus degradans (strain 2-40 / ATCC 43961 / DSM 17024).